Reading from the N-terminus, the 403-residue chain is TBC1 domain family member 20 (403 aa).

Residues 1–29 (MALRSARGDGPTSGRWDGGAEKGDFNAKR) are disordered. The span at 18–27 (GGAEKGDFNA) shows a compositional bias: basic and acidic residues. The 187-residue stretch at 60–246 (LLTDEIRRKV…RLYDFFLACH (187 aa)) folds into the Rab-GAP TBC domain. Transmembrane regions (helical) follow at residues 238-258 (LYDF…AVIV) and 367-387 (FVKL…LAVV).

Its subcellular location is the membrane. GTPase-activating protein (GAP) specific for Rab1 and Rab2 small GTPase families for which it can accelerate the intrinsic GTP hydrolysis rate by more than five orders of magnitude. Also shows GAP activity for RAB18 GTPase. Promotes RAB18 dissociation from the endoplasmic reticulum (ER) membrane into the cytosol, probably through stimulating RAB18 GTP-hydrolysis. Involved in maintaining endoplasmic reticulum structure. In Bos taurus (Bovine), this protein is TBC1 domain family member 20 (TBC1D20).